A 589-amino-acid chain; its full sequence is MAAADGDDSLYPIAVLIDELRNEDVQLRLNSIKKLSTIALALGVERTRSELLPFLTDTIYDEDEVLLALAEQLGTFTTLVGGPEYVHCLLPPLESLATVEETVVRDKAVESLRAISHEHSPSDLEAHFVPLVKRLAGGDWFTSRTSACGLFSVCYPRVSSAVKAELRQYFRNLCSDDTPMVRRAAASKLGEFAKVLELDNVKSEIIPMFSNLASDEQDSVRLLAVEACVNIAQLLPQEDLEALVMPTLRQAAEDKSWRVRYMVADKFTELQKAVGPEITKTDLVPAFQNLMKDCEAEVRAAASHKVKEFCENLSADCRENVIMSQILPCIKELVSDANQHVKSALASVIMGLSPILGKDNTIEHLLPLFLAQLKDECPEVRLNIISNLDCVNEVIGIRQLSQSLLPAIVELAEDAKWRVRLAIIEYMPLLAGQLGVEFFDEKLNSLCMAWLVDHVYAIREAATSNLKKLVEKFGKEWAHATIIPKVLAMSGDPNYLHRMTTLFCINVLSEVCGQDITTKHMLPTVLRMAGDPVANVRFNVAKSLQKIGPILDNSTLQSEVKPILEKLTQDQDVDVKYFAQEALTVLSLA.

Position 2 is an N-acetylalanine (A2). 15 HEAT repeats span residues 8–46 (DSLY…GVER), 47–84 (TRSE…GGPE), 85–123 (YVHC…SPSD), 124–161 (LEAH…VSSA), 162–200 (VKAE…ELDN), 201–239 (VKSE…PQED), 240–278 (LEAL…GPEI), 279–321 (TKTD…RENV), 322–360 (IMSQ…GKDN), 361–399 (TIEH…GIRQ), 400–438 (LSQS…GVEF), 439–477 (FDEK…GKEW), 478–516 (AHAT…GQDI), 517–555 (TTKH…DNST), and 556–589 (LQSE…LSLA). Residues 8–399 (DSLYPIAVLI…CVNEVIGIRQ (392 aa)) form a PP2A subunit B binding region. The tract at residues 47–321 (TRSELLPFLT…NLSADCRENV (275 aa)) is polyoma small and medium T antigens Binding. An SV40 small T antigen binding region spans residues 85 to 239 (YVHCLLPPLE…NIAQLLPQED (155 aa)). An N6-acetyllysine modification is found at K280. The segment at 400-589 (LSQSLLPAIV…QEALTVLSLA (190 aa)) is PP2A subunit C binding.

The protein belongs to the phosphatase 2A regulatory subunit A family. As to quaternary structure, PP2A consists of a common heterodimeric core enzyme, composed of PPP2CA a 36 kDa catalytic subunit (subunit C) and PPP2R1A a 65 kDa constant regulatory subunit (PR65 or subunit A), that associates with a variety of regulatory subunits. Proteins that associate with the core dimer include three families of regulatory subunits B (the R2/B/PR55/B55, R3/B''/PR72/PR130/PR59 and R5/B'/B56 families), the 48 kDa variable regulatory subunit, viral proteins, and cell signaling molecules. Found in a complex with at least ARL2, PPP2CB, PPP2R1A, PPP2R2A, PPP2R5E and TBCD. Interacts with the PP2A C catalytic subunit PPP2CA. Interacts with the PP2A B subunit PPP2R2A. Interacts with the PP2A B subunit PPP2R5D. Interacts with FOXO1; the interaction dephosphorylates FOXO1 on AKT-mediated phosphorylation sites. Interacts with IPO9. Interacts with TP53 and SGO1. Interacts with PLA2G16; this interaction might decrease PP2A activity. Interacts with CTTNBP2NL. Interacts with GNA12; the interaction promotes protein phosphatase 2A activation causing dephosphorylation of MAPT. Interacts with CIP2A; this interaction stabilizes CIP2A. Interacts with PABIR1/FAM122A. Interacts with ADCY8; antagonizes interaction between ADCY8 and calmodulin. Interacts with CRTC3 (when phosphorylated at 'Ser-391'). Interacts with SPRY2. Part of the core of STRIPAK complexes composed of PP2A catalytic and scaffolding subunits, the striatins (PP2A regulatory subunits), the striatin-associated proteins MOB4, STRIP1 and STRIP2, PDCD10 and members of the STE20 kinases, such as STK24 and STK26. Component of the Integrator-PP2A (INTAC) complex, composed of the Integrator core complex and protein phosphatase 2A subunits PPP2CA and PPP2R1A. In terms of assembly, (Microbial infection) Interacts with JC virus small t antigen; this interaction inhibits PPP2R1A activity.

The protein resides in the cytoplasm. It localises to the nucleus. It is found in the chromosome. The protein localises to the centromere. Its subcellular location is the lateral cell membrane. The protein resides in the cell projection. It localises to the dendrite. Its function is as follows. The PR65 subunit of protein phosphatase 2A serves as a scaffolding molecule to coordinate the assembly of the catalytic subunit and a variable regulatory B subunit. Upon interaction with GNA12 promotes dephosphorylation of microtubule associated protein TAU/MAPT. Required for proper chromosome segregation and for centromeric localization of SGO1 in mitosis. Together with RACK1 adapter, mediates dephosphorylation of AKT1 at 'Ser-473', preventing AKT1 activation and AKT-mTOR signaling pathway. Dephosphorylation of AKT1 is essential for regulatory T-cells (Treg) homeostasis and stability. Part of the striatin-interacting phosphatase and kinase (STRIPAK) complexes. STRIPAK complexes have critical roles in protein (de)phosphorylation and are regulators of multiple signaling pathways including Hippo, MAPK, nuclear receptor and cytoskeleton remodeling. Different types of STRIPAK complexes are involved in a variety of biological processes such as cell growth, differentiation, apoptosis, metabolism and immune regulation. Key mediator of a quality checkpoint during transcription elongation as part of the Integrator-PP2A (INTAC) complex. The INTAC complex drives premature transcription termination of transcripts that are unfavorably configured for transcriptional elongation: within the INTAC complex, acts as a scaffolding subunit for PPP2CA, which catalyzes dephosphorylation of the C-terminal domain (CTD) of Pol II subunit POLR2A/RPB1 and SUPT5H/SPT5, thereby preventing transcriptional elongation. Regulates the recruitment of the SKA complex to kinetochores. The protein is Serine/threonine-protein phosphatase 2A 65 kDa regulatory subunit A alpha isoform of Homo sapiens (Human).